The following is a 180-amino-acid chain: Fetal and adult testis-expressed transcript protein homolog (180 aa).

The interval 77 to 108 (GPQLRGVGVVGEQGDGGAQPQENPGGSQGMRS) is disordered. The segment covering 84–93 (GVVGEQGDGG) has biased composition (gly residues). A compositionally biased stretch (polar residues) spans 96–107 (PQENPGGSQGMR). The helical transmembrane segment at 160 to 178 (VLLFTMLLSSCITNLWLWM) threads the bilayer.

As to quaternary structure, interacts with BIK and RNF183. Interacts with IMMT/MIC60and EMD.

Its subcellular location is the mitochondrion. The protein resides in the mitochondrion outer membrane. It is found in the endoplasmic reticulum membrane. Functionally, involved in the regulation of endoplasmic reticulum (ER)-mitochondria coupling. Negatively regulates the ER-mitochondria distance and Ca(2+) transfer from ER to mitochondria possibly implicating it in the regulation of apoptosis. May collaborate with RNF183 to restrain BIK protein levels thus regulating apoptotic signaling. This Bos taurus (Bovine) protein is Fetal and adult testis-expressed transcript protein homolog (FATE1).